The following is a 485-amino-acid chain: Protein DETOXIFICATION 14 (485 aa).

Helical transmembrane passes span 30-50 (LSYI…LQVI), 68-88 (IAVS…ASAL), 112-132 (IVSL…IGDI), 147-167 (GKFA…QPLV), 175-195 (LILP…VLCW), 207-227 (GAAI…GLYM), 259-279 (ASMI…SGIL), 288-308 (VLSV…SLGA), 329-349 (AVYT…AIVF), 372-392 (MAPL…LSGV), 405-425 (VNLA…AFGF), and 432-452 (LWIG…LIVI).

The protein belongs to the multi antimicrobial extrusion (MATE) (TC 2.A.66.1) family.

It is found in the membrane. This is Protein DETOXIFICATION 14 from Arabidopsis thaliana (Mouse-ear cress).